A 317-amino-acid polypeptide reads, in one-letter code: Ribonuclease Z (317 aa).

The Zn(2+) site is built by His61, His63, Asp65, His66, His153, Asp221, and His280. Asp65 (proton acceptor) is an active-site residue.

It belongs to the RNase Z family. Homodimer. Requires Zn(2+) as cofactor.

It carries out the reaction Endonucleolytic cleavage of RNA, removing extra 3' nucleotides from tRNA precursor, generating 3' termini of tRNAs. A 3'-hydroxy group is left at the tRNA terminus and a 5'-phosphoryl group is left at the trailer molecule.. Zinc phosphodiesterase, which displays some tRNA 3'-processing endonuclease activity. Probably involved in tRNA maturation, by removing a 3'-trailer from precursor tRNA. This Alkaliphilus oremlandii (strain OhILAs) (Clostridium oremlandii (strain OhILAs)) protein is Ribonuclease Z.